A 1025-amino-acid polypeptide reads, in one-letter code: Multidrug resistance protein MdtC (1025 aa).

12 helical membrane passes run 3 to 23 (FFAL…AITL), 333 to 353 (EVEQ…FLFL), 360 to 380 (IIPA…MYLC), 387 to 407 (LSLM…IVVL), 431 to 451 (VGFT…PLLL), 463 to 483 (FAVT…TLTP), 528 to 548 (LVGV…ISIP), 853 to 873 (VILI…LYES), 875 to 895 (VHPL…LLAL), 897 to 917 (LFNA…IGIV), 953 to 973 (PIMM…LSGG), and 984 to 1004 (ITIV…TPVV).

This sequence belongs to the resistance-nodulation-cell division (RND) (TC 2.A.6) family. MdtC subfamily. Part of a tripartite efflux system composed of MdtA, MdtB and MdtC. MdtC forms a heteromultimer with MdtB.

The protein localises to the cell inner membrane. In terms of biological role, the MdtABC tripartite complex confers resistance against novobiocin and deoxycholate. In Escherichia coli O127:H6 (strain E2348/69 / EPEC), this protein is Multidrug resistance protein MdtC.